The primary structure comprises 572 residues: MAWGHRTTVCLVLLGVSLGLAIIVLAVVLPHHQASCRPDAFTRAAVAADSKICSDIGRVILQQQGSPVDAAIAALICTGVVNPQSMGLGGGVVFTIYNASTGKVEVINARETVPASHDQRLLDQCTNALPLCTGAQWIGVPGELRGYAEAHRRYGRLPWAQLFQPTIALLREGFRVPPILSQFLNTSFLQPCLNSSTLRQLFFNGTETLRSQDPLPWPALANTLETVAKEGAEVLYTGKLGQTLVEDIAWQGSQLTVQDLAAFRPKVVEPLEMALGNYTLYSPPPPAGGAILSFILNVLKGFNFSAETVAGPEGKVNMYHHLVEALKFAVGQRWRLWDPYSHPGIQNISQDLLRETLAQHIRQQIDGRGDHQLSHYNLSGVRGNSMGTSHVSVLGEDGSAVAATSTINTPFGAMVYSPRTGILLNNELLDLCWRHKPGSTVTPPPVPGEQPPSSMVPSILINEVQGSKLVIGGAGGELIISAVTQAIVNKLWLGFSLTDAIAAPILHVNSKGHVEYEPKFNQEVRKGLQDRGQSQSQSQRPVFLNSVQAVFQEGPCVYAASDLRKAGKASGY.

Residues 1 to 6 are Cytoplasmic-facing; it reads MAWGHR. Residues 7 to 29 traverse the membrane as a helical; Signal-anchor for type II membrane protein segment; it reads TTVCLVLLGVSLGLAIIVLAVVL. Residues 30 to 572 lie on the Extracellular side of the membrane; that stretch reads PHHQASCRPD…LRKAGKASGY (543 aa). The N-linked (GlcNAc...) asparagine glycan is linked to Asn-98. Residue Arg-110 coordinates L-glutamate. Asn-185, Asn-194, Asn-204, Asn-277, Asn-303, Asn-347, and Asn-377 each carry an N-linked (GlcNAc...) asparagine glycan. The Nucleophile role is filled by Thr-388. L-glutamate is bound by residues Thr-406, Glu-427, and 453-454; that span reads SS.

It belongs to the gamma-glutamyltransferase family. As to quaternary structure, heterodimer composed of the light and heavy chains. The active site is located in the light chain. Post-translationally, cleaved by autocatalysis into a large and a small subunit. Glycosylated. Widely expressed, but at low level, except in the airway epithelial cells. Detected in brain, heart, kidney, liver, lung, spleen, testis and trachea.

It localises to the membrane. The catalysed reaction is glutathione + H2O = L-cysteinylglycine + L-glutamate. It carries out the reaction an S-substituted glutathione + H2O = an S-substituted L-cysteinylglycine + L-glutamate. The enzyme catalyses leukotriene C4 + H2O = leukotriene D4 + L-glutamate. It catalyses the reaction S-[(2E,6E,10E)-geranylgeranyl]-L-glutathione + H2O = S-[(2E,6E,10E)-geranylgeranyl]-L-cysteinylglycine + L-glutamate. The catalysed reaction is an N-terminal (5-L-glutamyl)-[peptide] + an alpha-amino acid = 5-L-glutamyl amino acid + an N-terminal L-alpha-aminoacyl-[peptide]. It functions in the pathway lipid metabolism; leukotriene D4 biosynthesis. It participates in sulfur metabolism; glutathione metabolism. Its activity is regulated as follows. Inhibited by serine-borate. Its function is as follows. Cleaves the gamma-glutamyl bond of extracellular glutathione tripeptide (gamma-Glu-Cys-Gly) and certain glutathione conjugates. Hydrolyzes glutathione releasing L-Glu and Cys-Gly dipeptide which is further metabolized to maintain extracellular cysteine levels but also to provide cysteine necessary for intracellular glutathione synthesis. Among glutathione-S-conjugates metabolizes leukotriene C4 (LTC4) and S-geranylgeranyl-glutathione (GGG), but is inactive toward gamma-glutamyl leucine. Converts extracellular LTC4 to LTD4 during acute inflammatory response. Acts as a negative regulator of GGG bioactivity. GGT5 (via GGG catabolism) and ABCC1 (via extracellular transport) establish GGG gradients within lymphoid tissues to position P2RY8-positive lymphocytes at germinal centers in lymphoid follicles and restrict their chemotactic transmigration from blood vessels to bone marrow parenchyma. The transpeptidation reaction, i.e. the transfer of gamma-glutamyl moiety to an acceptor molecule to yield a new gamma-glutamyl compound requires high concentration of dipeptide acceptor and is considered nonphysiological. The sequence is that of Glutathione hydrolase 5 proenzyme (Ggt5) from Rattus norvegicus (Rat).